We begin with the raw amino-acid sequence, 210 residues long: Proteasome subunit beta (210 aa).

Residues 1–7 (MEVLKTG) constitute a propeptide, removed in mature form; by autocatalysis. The Nucleophile role is filled by Thr-8.

The protein belongs to the peptidase T1B family. As to quaternary structure, the 20S proteasome core is composed of 14 alpha and 14 beta subunits that assemble into four stacked heptameric rings, resulting in a barrel-shaped structure. The two inner rings, each composed of seven catalytic beta subunits, are sandwiched by two outer rings, each composed of seven alpha subunits. The catalytic chamber with the active sites is on the inside of the barrel. Has a gated structure, the ends of the cylinder being occluded by the N-termini of the alpha-subunits. Is capped at one or both ends by the proteasome regulatory ATPase, PAN.

It is found in the cytoplasm. The catalysed reaction is Cleavage of peptide bonds with very broad specificity.. With respect to regulation, the formation of the proteasomal ATPase PAN-20S proteasome complex, via the docking of the C-termini of PAN into the intersubunit pockets in the alpha-rings, triggers opening of the gate for substrate entry. Interconversion between the open-gate and close-gate conformations leads to a dynamic regulation of the 20S proteasome proteolysis activity. Its function is as follows. Component of the proteasome core, a large protease complex with broad specificity involved in protein degradation. This chain is Proteasome subunit beta, found in Picrophilus torridus (strain ATCC 700027 / DSM 9790 / JCM 10055 / NBRC 100828 / KAW 2/3).